The sequence spans 98 residues: NADH-ubiquinone oxidoreductase chain 4L (98 aa).

The next 3 membrane-spanning stretches (helical) occupy residues 2 to 22, 29 to 49, and 61 to 81; these read PSIS…MLIF, SLLC…LTIL, and ILLL…LVTV.

This sequence belongs to the complex I subunit 4L family. In terms of assembly, core subunit of respiratory chain NADH dehydrogenase (Complex I) which is composed of 45 different subunits.

It localises to the mitochondrion inner membrane. It catalyses the reaction a ubiquinone + NADH + 5 H(+)(in) = a ubiquinol + NAD(+) + 4 H(+)(out). Core subunit of the mitochondrial membrane respiratory chain NADH dehydrogenase (Complex I) which catalyzes electron transfer from NADH through the respiratory chain, using ubiquinone as an electron acceptor. Part of the enzyme membrane arm which is embedded in the lipid bilayer and involved in proton translocation. The protein is NADH-ubiquinone oxidoreductase chain 4L (MT-ND4L) of Lemur catta (Ring-tailed lemur).